Here is a 156-residue protein sequence, read N- to C-terminus: MSRRHKAEKREINPDPKFGDLVITKFMNAVMLHGKKSVAESIVYGALDAIEATAKSEPVALFHQALDNVAPHIEVRSRRVGGATYQVPVDVRPERRQALAIRWLINAARGRNETTMVDRLSGELLDAANNRGSAVKKREDTHRMAEANRAFSHYRW.

The protein belongs to the universal ribosomal protein uS7 family. In terms of assembly, part of the 30S ribosomal subunit. Contacts proteins S9 and S11.

Functionally, one of the primary rRNA binding proteins, it binds directly to 16S rRNA where it nucleates assembly of the head domain of the 30S subunit. Is located at the subunit interface close to the decoding center, probably blocks exit of the E-site tRNA. The polypeptide is Small ribosomal subunit protein uS7 (Brucella melitensis biotype 1 (strain ATCC 23456 / CCUG 17765 / NCTC 10094 / 16M)).